The primary structure comprises 274 residues: Penicillin-insensitive murein endopeptidase (274 aa).

Residues 1-19 (MNKTAIALLALLASSASLA) form the signal peptide. 3 disulfide bridges follow: cysteine 44–cysteine 265, cysteine 187–cysteine 235, and cysteine 216–cysteine 223. 6 residues coordinate Zn(2+): histidine 110, histidine 113, aspartate 120, aspartate 147, histidine 150, and histidine 211. The disordered stretch occupies residues 227 to 274 (PLPPPGDGCGAELQSWFEPPKPGTTKPEKKTPPPLPPSCQALLDEHVI).

The protein belongs to the peptidase M74 family. As to quaternary structure, dimer. The cofactor is Zn(2+).

It localises to the periplasm. Functionally, murein endopeptidase that cleaves the D-alanyl-meso-2,6-diamino-pimelyl amide bond that connects peptidoglycan strands. Likely plays a role in the removal of murein from the sacculus. The polypeptide is Penicillin-insensitive murein endopeptidase (Escherichia coli O9:H4 (strain HS)).